A 123-amino-acid polypeptide reads, in one-letter code: ATP synthase epsilon chain (123 aa).

The protein belongs to the ATPase epsilon chain family. As to quaternary structure, F-type ATPases have 2 components, CF(1) - the catalytic core - and CF(0) - the membrane proton channel. CF(1) has five subunits: alpha(3), beta(3), gamma(1), delta(1), epsilon(1). CF(0) has three main subunits: a, b and c.

Its subcellular location is the cell inner membrane. Functionally, produces ATP from ADP in the presence of a proton gradient across the membrane. This chain is ATP synthase epsilon chain, found in Helicobacter acinonychis (strain Sheeba).